A 24-amino-acid chain; its full sequence is Conotoxin PIVE (24 aa).

Cystine bridges form between cysteine 2/cysteine 10, cysteine 3/cysteine 15, and cysteine 13/cysteine 19. Lysine 24 bears the Lysine amide mark.

The protein belongs to the conotoxin A superfamily. Expressed by the venom duct.

It is found in the secreted. Probable neurotoxin with ion channel inhibitor activity. In vivo, elicits dose-dependently excitatory activity upon injection into fish. Its action is slowly reversible. This Conus purpurascens (Purple cone) protein is Conotoxin PIVE.